The chain runs to 350 residues: Purine-rich element-binding protein gamma (350 aa).

Disordered regions lie at residues 1 to 59 (MERA…GTSE) and 136 to 172 (GHRQEHGQSKEQVSRRRQKHSAPSPPVSVGSEEHPHS). Residues 9–27 (GGGSGGGRGRGGKNVGGPG) are compositionally biased toward gly residues. Residues 47–59 (ASATPNQSGGTSE) show a composition bias toward polar residues. A DNA-binding region spans residues 54–296 (SGGTSEIQEL…GIFLKVSEVR (243 aa)). Residues 137-149 (HRQEHGQSKEQVS) show a composition bias toward basic and acidic residues. Phosphoserine occurs at positions 163, 166, and 342.

Belongs to the PUR DNA-binding protein family. Isoform 1 is expressed in testis. Isoform 2 is expressed in blastocyst and kidney.

It is found in the nucleus. The sequence is that of Purine-rich element-binding protein gamma (Purg) from Mus musculus (Mouse).